A 160-amino-acid chain; its full sequence is RNA pyrophosphohydrolase (160 aa).

Residues 10–154 form the Nudix hydrolase domain; the sequence is PYRKCVGVVL…KRDVYEQVFD (145 aa). The Nudix box motif lies at 44–65; it reads GGIEDGEDARTAALRELVEETG.

This sequence belongs to the Nudix hydrolase family. RppH subfamily. Requires a divalent metal cation as cofactor.

In terms of biological role, accelerates the degradation of transcripts by removing pyrophosphate from the 5'-end of triphosphorylated RNA, leading to a more labile monophosphorylated state that can stimulate subsequent ribonuclease cleavage. This chain is RNA pyrophosphohydrolase, found in Dinoroseobacter shibae (strain DSM 16493 / NCIMB 14021 / DFL 12).